We begin with the raw amino-acid sequence, 363 residues long: UDP-3-O-acylglucosamine N-acyltransferase (363 aa).

His252 acts as the Proton acceptor in catalysis.

The protein belongs to the transferase hexapeptide repeat family. LpxD subfamily. As to quaternary structure, homotrimer.

The catalysed reaction is a UDP-3-O-[(3R)-3-hydroxyacyl]-alpha-D-glucosamine + a (3R)-hydroxyacyl-[ACP] = a UDP-2-N,3-O-bis[(3R)-3-hydroxyacyl]-alpha-D-glucosamine + holo-[ACP] + H(+). Its pathway is bacterial outer membrane biogenesis; LPS lipid A biosynthesis. Catalyzes the N-acylation of UDP-3-O-acylglucosamine using 3-hydroxyacyl-ACP as the acyl donor. Is involved in the biosynthesis of lipid A, a phosphorylated glycolipid that anchors the lipopolysaccharide to the outer membrane of the cell. The chain is UDP-3-O-acylglucosamine N-acyltransferase from Cupriavidus necator (strain ATCC 17699 / DSM 428 / KCTC 22496 / NCIMB 10442 / H16 / Stanier 337) (Ralstonia eutropha).